Here is a 108-residue protein sequence, read N- to C-terminus: Iron-sulfur cluster assembly protein CyaY (108 aa).

It belongs to the frataxin family.

Involved in iron-sulfur (Fe-S) cluster assembly. May act as a regulator of Fe-S biogenesis. This is Iron-sulfur cluster assembly protein CyaY from Burkholderia mallei (strain NCTC 10247).